A 282-amino-acid polypeptide reads, in one-letter code: MTHWPSPAKLNLFLYITGQRADGYHTLQTLFQFLDYGDTLHIEPRHDGEIHLLTPVTGVENEDNLIVRAARLLMKAASESGRLPVGSGADISIEKRLPMGGGLGGGSSNAATVLVALNHLWQCGLSIDELATLGLTLGADVPVFVRGHAAFAEGVGEILTPVNPPEKWYLVAHPGVSIPTPVIFKDPQLPRNTPKRSIDTLLKCEFSNDCEVIARKRFREVDAALSWLLEYAPSRLTGTGACVFAEFDTESCARQVLEQAPEWLNAFVAKGVNLSPLHRELL.

K9 is a catalytic residue. 98–108 (PMGGGLGGGSS) is a binding site for ATP. Residue D140 is part of the active site.

This sequence belongs to the GHMP kinase family. IspE subfamily. As to quaternary structure, homodimer.

The enzyme catalyses 4-CDP-2-C-methyl-D-erythritol + ATP = 4-CDP-2-C-methyl-D-erythritol 2-phosphate + ADP + H(+). It participates in isoprenoid biosynthesis; isopentenyl diphosphate biosynthesis via DXP pathway; isopentenyl diphosphate from 1-deoxy-D-xylulose 5-phosphate: step 3/6. In terms of biological role, catalyzes the phosphorylation of the position 2 hydroxy group of 4-diphosphocytidyl-2C-methyl-D-erythritol. The protein is 4-diphosphocytidyl-2-C-methyl-D-erythritol kinase of Salmonella schwarzengrund (strain CVM19633).